A 215-amino-acid chain; its full sequence is 3-demethoxyubiquinol 3-hydroxylase (215 aa).

6 residues coordinate Fe cation: Glu64, Glu94, His97, Glu146, Glu178, and His181.

This sequence belongs to the COQ7 family. Fe cation serves as cofactor.

It is found in the cell membrane. The catalysed reaction is a 5-methoxy-2-methyl-3-(all-trans-polyprenyl)benzene-1,4-diol + AH2 + O2 = a 3-demethylubiquinol + A + H2O. The protein operates within cofactor biosynthesis; ubiquinone biosynthesis. Its function is as follows. Catalyzes the hydroxylation of 2-nonaprenyl-3-methyl-6-methoxy-1,4-benzoquinol during ubiquinone biosynthesis. The sequence is that of 3-demethoxyubiquinol 3-hydroxylase from Coxiella burnetii (strain Dugway 5J108-111).